A 184-amino-acid polypeptide reads, in one-letter code: Copper transporter 6 (184 aa).

Low complexity predominate over residues 1–25; the sequence is MRGMGDDGMGPMAMAPPRSGHATAA. The segment at 1–27 is disordered; the sequence is MRGMGDDGMGPMAMAPPRSGHATAAAP. The next 2 helical transmembrane spans lie at 64 to 84 and 124 to 144; these read YALC…LSVL and MAYL…LAAV.

The protein belongs to the copper transporter (Ctr) (TC 1.A.56) family. SLC31A subfamily.

The protein localises to the membrane. Functionally, involved in the transport of copper. The chain is Copper transporter 6 (COPT6) from Oryza sativa subsp. japonica (Rice).